We begin with the raw amino-acid sequence, 2462 residues long: Piezo-type mechanosensitive ion channel homolog (2462 aa).

Helical transmembrane passes span 5–25 (LVGF…WSVI), 27–47 (FLDL…GYRF), 57–77 (IFIF…IWAA), 105–125 (TVMY…ADIY), 163–183 (AVQL…FFIG), 207–227 (LYIY…PINF), 248–268 (EGPD…LSYV), 325–345 (FFTY…FHFA), 347–367 (LCAF…PSLF), 374–394 (GLLL…NVAF), 404–424 (FGLG…FLYL), 467–487 (LIFL…IFFL), 502–522 (SLIL…IDLV), 554–574 (IALL…LFSF), 653–673 (VYLV…LLWI), 694–714 (AVLV…QLWL), 730–750 (APLL…QLYS), 792–812 (FYAS…GLVI), and 826–846 (SFLI…LWGM). The disordered stretch occupies residues 927–947 (ASVSSSNGENPSSTDHASISM). Positions 928 to 939 (SVSSSNGENPSS) are enriched in low complexity. A run of 8 helical transmembrane segments spans residues 1027–1047 (FWIE…ALLL), 1050–1070 (FALL…CVLL), 1078–1098 (LWPV…VATW), 1143–1160 (TLIS…KLRA), 1204–1224 (LYCY…TGTL), 1228–1248 (ILHL…LEIL), 1260–1280 (VYNF…VGNF), and 1310–1330 (SALV…MFSS). Residues 1347–1400 (AIVREQEKKAARKTEQLQQIREAEEKKRQRNLQVEKMKSEMLNLRVQLHRMNSD) are a coiled coil. The disordered stretch occupies residues 1543-1583 (SDTNEQSSVDDEVYDEMESQKRKHTPFERSTSLQSDRSSDG). A compositionally biased stretch (acidic residues) spans 1550-1559 (SVDDEVYDEM). A compositionally biased stretch (polar residues) spans 1570 to 1583 (ERSTSLQSDRSSDG). 8 consecutive transmembrane segments (helical) span residues 1611 to 1631 (FIIA…AALF), 1647 to 1667 (VIML…QIII), 1916 to 1936 (YIFG…QSVI), 1956 to 1976 (FVII…IYLC), 1984 to 2004 (VYYL…AWSI), 2012 to 2032 (AGLA…LQAI), 2130 to 2150 (GICL…MYSS), and 2369 to 2389 (FLGD…FVLA).

Belongs to the PIEZO (TC 1.A.75) family.

The protein localises to the membrane. Its function is as follows. Pore-forming subunit of a mechanosensitive non-specific cation channel, that conducts both sodium and potassium ions. The sequence is that of Piezo-type mechanosensitive ion channel homolog from Arabidopsis thaliana (Mouse-ear cress).